We begin with the raw amino-acid sequence, 282 residues long: NH(3)-dependent NAD(+) synthetase (282 aa).

ATP is bound at residue 51-58; it reads GISGGVDS. A Mg(2+)-binding site is contributed by Asp57. Arg148 serves as a coordination point for deamido-NAD(+). Thr168 contacts ATP. Glu173 serves as a coordination point for Mg(2+). Lys181 and Asp188 together coordinate deamido-NAD(+). Positions 197 and 219 each coordinate ATP. 268-269 lines the deamido-NAD(+) pocket; sequence HK.

This sequence belongs to the NAD synthetase family. As to quaternary structure, homodimer.

The catalysed reaction is deamido-NAD(+) + NH4(+) + ATP = AMP + diphosphate + NAD(+) + H(+). It functions in the pathway cofactor biosynthesis; NAD(+) biosynthesis; NAD(+) from deamido-NAD(+) (ammonia route): step 1/1. In terms of biological role, catalyzes the ATP-dependent amidation of deamido-NAD to form NAD. Uses ammonia as a nitrogen source. The sequence is that of NH(3)-dependent NAD(+) synthetase from Burkholderia lata (strain ATCC 17760 / DSM 23089 / LMG 22485 / NCIMB 9086 / R18194 / 383).